The primary structure comprises 410 residues: Cysteine desulfurase IscS (410 aa).

Pyridoxal 5'-phosphate contacts are provided by residues 80–81 (AT), Asn-160, Gln-188, and 208–210 (SGH). An N6-(pyridoxal phosphate)lysine modification is found at Lys-211. Thr-248 contributes to the pyridoxal 5'-phosphate binding site. Residue Cys-334 is the Cysteine persulfide intermediate of the active site. Cys-334 provides a ligand contact to [2Fe-2S] cluster.

This sequence belongs to the class-V pyridoxal-phosphate-dependent aminotransferase family. NifS/IscS subfamily. As to quaternary structure, homodimer. Forms a heterotetramer with IscU, interacts with other sulfur acceptors. Pyridoxal 5'-phosphate serves as cofactor.

It is found in the cytoplasm. The enzyme catalyses (sulfur carrier)-H + L-cysteine = (sulfur carrier)-SH + L-alanine. The protein operates within cofactor biosynthesis; iron-sulfur cluster biosynthesis. Master enzyme that delivers sulfur to a number of partners involved in Fe-S cluster assembly, tRNA modification or cofactor biosynthesis. Catalyzes the removal of elemental sulfur atoms from cysteine to produce alanine. Functions as a sulfur delivery protein for Fe-S cluster synthesis onto IscU, an Fe-S scaffold assembly protein, as well as other S acceptor proteins. This is Cysteine desulfurase IscS from Rickettsia typhi (strain ATCC VR-144 / Wilmington).